The following is a 296-amino-acid chain: ATP synthase gamma chain (296 aa).

Belongs to the ATPase gamma chain family. As to quaternary structure, F-type ATPases have 2 components, CF(1) - the catalytic core - and CF(0) - the membrane proton channel. CF(1) has five subunits: alpha(3), beta(3), gamma(1), delta(1), epsilon(1). CF(0) has three main subunits: a, b and c.

The protein resides in the cell inner membrane. Its function is as follows. Produces ATP from ADP in the presence of a proton gradient across the membrane. The gamma chain is believed to be important in regulating ATPase activity and the flow of protons through the CF(0) complex. The sequence is that of ATP synthase gamma chain from Methylorubrum extorquens (strain PA1) (Methylobacterium extorquens).